Reading from the N-terminus, the 150-residue chain is D-aminoacyl-tRNA deacylase (150 aa).

Positions 140–141 match the Gly-cisPro motif, important for rejection of L-amino acids motif; that stretch reads GP.

It belongs to the DTD family. Homodimer.

The protein resides in the cytoplasm. It catalyses the reaction glycyl-tRNA(Ala) + H2O = tRNA(Ala) + glycine + H(+). The enzyme catalyses a D-aminoacyl-tRNA + H2O = a tRNA + a D-alpha-amino acid + H(+). The catalysed reaction is D-tyrosyl-tRNA(Tyr) + H2O = D-tyrosine + tRNA(Tyr). An aminoacyl-tRNA editing enzyme that deacylates mischarged D-aminoacyl-tRNAs. Hydrolyzes D-tyrosyl-tRNA(Tyr) into D-tyrosine and free tRNA(Tyr). May also deacylate mischarged D-leucyl-tRNA(Leu). Also deacylates mischarged glycyl-tRNA(Ala), protecting cells against glycine mischarging by AlaRS. Acts via tRNA-based rather than protein-based catalysis; rejects L-amino acids rather than detecting D-amino acids in the active site. By recycling D-aminoacyl-tRNA to D-amino acids and free tRNA molecules, this enzyme counteracts the toxicity associated with the formation of D-aminoacyl-tRNA entities in vivo and helps enforce protein L-homochirality. The sequence is that of D-aminoacyl-tRNA deacylase from Saccharomyces cerevisiae (strain ATCC 204508 / S288c) (Baker's yeast).